The following is a 170-amino-acid chain: tRNA-splicing endonuclease (170 aa).

Catalysis depends on residues Tyr110, His116, and Lys147.

The protein belongs to the tRNA-intron endonuclease family. Archaeal short subfamily. In terms of assembly, homotetramer; although the tetramer contains four active sites, only two participate in the cleavage. Therefore, it should be considered as a dimer of dimers.

The catalysed reaction is pretRNA = a 3'-half-tRNA molecule with a 5'-OH end + a 5'-half-tRNA molecule with a 2',3'-cyclic phosphate end + an intron with a 2',3'-cyclic phosphate and a 5'-hydroxyl terminus.. Functionally, endonuclease that removes tRNA introns. Cleaves pre-tRNA at the 5'- and 3'-splice sites to release the intron. The products are an intron and two tRNA half-molecules bearing 2',3' cyclic phosphate and 5'-OH termini. Recognizes a pseudosymmetric substrate in which 2 bulged loops of 3 bases are separated by a stem of 4 bp. The protein is tRNA-splicing endonuclease of Pyrococcus horikoshii (strain ATCC 700860 / DSM 12428 / JCM 9974 / NBRC 100139 / OT-3).